Here is a 360-residue protein sequence, read N- to C-terminus: Cytochrome b-c1 complex subunit 2, mitochondrial (360 aa).

The transit peptide at 1-15 (MLSSRLQFAQQTARK) directs the protein to the mitochondrion.

It belongs to the peptidase M16 family. UQCRC2/QCR2 subfamily. As to quaternary structure, component of the ubiquinol-cytochrome c oxidoreductase (cytochrome b-c1 complex, complex III, CIII), a multisubunit enzyme composed of 3 respiratory subunits cytochrome b, cytochrome c1 and Rieske protein, 2 core protein subunits, and additional low-molecular weight protein subunits. The complex exists as an obligatory dimer and forms supercomplexes (SCs) in the inner mitochondrial membrane with cytochrome c oxidase (complex IV, CIV).

It is found in the mitochondrion inner membrane. In terms of biological role, component of the ubiquinol-cytochrome c oxidoreductase, a multisubunit transmembrane complex that is part of the mitochondrial electron transport chain which drives oxidative phosphorylation. The respiratory chain contains 3 multisubunit complexes succinate dehydrogenase (complex II, CII), ubiquinol-cytochrome c oxidoreductase (cytochrome b-c1 complex, complex III, CIII) and cytochrome c oxidase (complex IV, CIV), that cooperate to transfer electrons derived from NADH and succinate to molecular oxygen, creating an electrochemical gradient over the inner membrane that drives transmembrane transport and the ATP synthase. The cytochrome b-c1 complex catalyzes electron transfer from ubiquinol to cytochrome c, linking this redox reaction to translocation of protons across the mitochondrial inner membrane, with protons being carried across the membrane as hydrogens on the quinol. In the process called Q cycle, 2 protons are consumed from the matrix, 4 protons are released into the intermembrane space and 2 electrons are passed to cytochrome c. The chain is Cytochrome b-c1 complex subunit 2, mitochondrial (QCR2) from Kluyveromyces lactis (strain ATCC 8585 / CBS 2359 / DSM 70799 / NBRC 1267 / NRRL Y-1140 / WM37) (Yeast).